A 244-amino-acid chain; its full sequence is tRNA (guanine-N(1)-)-methyltransferase (244 aa).

S-adenosyl-L-methionine contacts are provided by residues G123 and 143 to 148; that span reads LGDFVM.

It belongs to the RNA methyltransferase TrmD family. As to quaternary structure, homodimer.

The protein localises to the cytoplasm. It carries out the reaction guanosine(37) in tRNA + S-adenosyl-L-methionine = N(1)-methylguanosine(37) in tRNA + S-adenosyl-L-homocysteine + H(+). Its function is as follows. Specifically methylates guanosine-37 in various tRNAs. This is tRNA (guanine-N(1)-)-methyltransferase from Ruegeria sp. (strain TM1040) (Silicibacter sp.).